We begin with the raw amino-acid sequence, 308 residues long: Ankyrin repeat and SOCS box protein 12 (308 aa).

5 ANK repeats span residues I63–S92, K96–G125, N129–V158, S171–Y200, and Q213–L243. The SOCS box domain maps to P268–Q308.

It belongs to the ankyrin SOCS box (ASB) family. Interacts with CUL5 and RNF7.

It functions in the pathway protein modification; protein ubiquitination. Its function is as follows. Probable substrate-recognition component of a SCF-like ECS (Elongin-Cullin-SOCS-box protein) E3 ubiquitin-protein ligase complex which mediates the ubiquitination and subsequent proteasomal degradation of target proteins. This chain is Ankyrin repeat and SOCS box protein 12 (Asb12), found in Mus musculus (Mouse).